The sequence spans 160 residues: DNA topoisomerase small subunit (160 aa).

Part of the DNA topoisomerase complex made of gp39, gp52 and gp60. Mg(2+) serves as cofactor.

The catalysed reaction is ATP-dependent breakage, passage and rejoining of double-stranded DNA.. Small subunit of the DNA topoisomerase that untwists superhelical DNA. Controls topological states of double-stranded DNA by transient breakage and subsequent rejoining of DNA strands. This chain is DNA topoisomerase small subunit (60), found in Enterobacteria phage T4 (Bacteriophage T4).